Consider the following 919-residue polypeptide: Phosphoenolpyruvate carboxylase (919 aa).

Residues histidine 138 and lysine 579 contribute to the active site.

The protein belongs to the PEPCase type 1 family. The cofactor is Mg(2+).

It carries out the reaction oxaloacetate + phosphate = phosphoenolpyruvate + hydrogencarbonate. Its function is as follows. Forms oxaloacetate, a four-carbon dicarboxylic acid source for the tricarboxylic acid cycle. In Corynebacterium efficiens (strain DSM 44549 / YS-314 / AJ 12310 / JCM 11189 / NBRC 100395), this protein is Phosphoenolpyruvate carboxylase (ppc).